The primary structure comprises 284 residues: Protein SCO1 homolog, mitochondrial (284 aa).

Residues 46-73 form a disordered region; that stretch reads RAFSAGPPPPGAGPEPKGGQAGSHRPKP. A helical transmembrane segment spans residues 81 to 98; that stretch reads LALTFAIGGSLLAGMKYF. At 99-284 the chain is on the mitochondrial intermembrane side; it reads KKEKIEKLEK…AHMRSHMKKR (186 aa). An important for dimerization region spans residues 101 to 114; that stretch reads EKIEKLEKQRHRSI. Cu cation contacts are provided by Cys-152, Cys-156, and His-243. Residues Cys-152 and Cys-156 are joined by a disulfide bond.

This sequence belongs to the SCO1/2 family. Homodimer. Interacts with COA6. Found in a complex with TMEM177, COX20, COA6, MT-CO2/COX2, COX18 and SCO2. Interacts with TMEM177 in a COX20-dependent manner. Interacts with COX20 in a MT-CO2/COX2- and COX18-dependent manner. Interacts with COX16.

The protein localises to the mitochondrion. It is found in the mitochondrion inner membrane. Functionally, copper metallochaperone essential for the maturation of cytochrome c oxidase subunit II (MT-CO2/COX2). Not required for the synthesis of MT-CO2/COX2 but plays a crucial role in stabilizing MT-CO2/COX2 during its subsequent maturation. Involved in transporting copper to the Cu(A) site on MT-CO2/COX2. Plays an important role in the regulation of copper homeostasis by controlling the abundance and cell membrane localization of copper transporter CTR1. This Mus musculus (Mouse) protein is Protein SCO1 homolog, mitochondrial (Sco1).